A 237-amino-acid chain; its full sequence is Cytosolic-abundant heat soluble protein 86272 (237 aa).

The disordered stretch occupies residues 96–125; that stretch reads FKDQEKYSREQAAIARAHDKDLEKKTEEYR. A compositionally biased stretch (basic and acidic residues) spans 111-125; that stretch reads RAHDKDLEKKTEEYR. The stretch at 115–193 forms a coiled coil; that stretch reads KDLEKKTEEY…MNALEQSKMA (79 aa). 2 CAHS motif regions span residues 124-142 and 161-179; these read YRKT…LEKQ and QKRE…LEHE. Residues 204 to 215 are compositionally biased toward low complexity; it reads AGTTVSGGTTVS. The segment at 204-237 is disordered; it reads AGTTVSGGTTVSEHTEVHDGKEKKSLGEKIKSLF. The segment covering 216 to 237 has biased composition (basic and acidic residues); sequence EHTEVHDGKEKKSLGEKIKSLF.

This sequence belongs to the Cytosolic-abundant heat soluble protein (CAHS) family.

It is found in the cytoplasm. In terms of biological role, CAHS proteins are cytosolic heat soluble proteins that seem to contribute to the anhydrobiosis in tardigrades, but their specific mechanisms are yet to be identified. It is possible that protection during anhydrobiosis might occur via the stabilization of vitrifying small molecules such as sugars, but not via the direct glass transition of CAHS proteins themselves. This Hypsibius exemplaris (Freshwater tardigrade) protein is Cytosolic-abundant heat soluble protein 86272.